A 37-amino-acid polypeptide reads, in one-letter code: Large ribosomal subunit protein bL36c (37 aa).

Belongs to the bacterial ribosomal protein bL36 family.

It localises to the plastid. Its subcellular location is the chloroplast. This Lepidium virginicum (Virginia pepperweed) protein is Large ribosomal subunit protein bL36c.